Consider the following 95-residue polypeptide: UPF0473 protein CD630_12860 (95 aa).

It belongs to the UPF0473 family.

The polypeptide is UPF0473 protein CD630_12860 (Clostridioides difficile (strain 630) (Peptoclostridium difficile)).